The sequence spans 223 residues: MQRAARPLVSVSDLDADKAAALKLIPIPSALEARLDAYVALLQQWQAKTNLVAPSTLPQLWTRHVADSLQLVSLMPHARRWLDFGSGGGFPGVVLACAMADVGGHVTLVERIAKKAAFLREALRVAGAPGTVVLADIGDNVDRFPQALDCITARAVAPLHQLIGFAEPLMTPGITKALFLKGQDVDAELTESTKYWKFQPKLHASLTGGQGWIVEIDHIERRT.

S-adenosyl-L-methionine contacts are provided by Gly85, Phe90, and Arg154.

Belongs to the methyltransferase superfamily. RNA methyltransferase RsmG family.

It is found in the cytoplasm. It carries out the reaction guanosine(527) in 16S rRNA + S-adenosyl-L-methionine = N(7)-methylguanosine(527) in 16S rRNA + S-adenosyl-L-homocysteine. Functionally, specifically methylates the N7 position of guanine in position 527 of 16S rRNA. In Rhodopseudomonas palustris (strain TIE-1), this protein is Ribosomal RNA small subunit methyltransferase G.